Here is a 316-residue protein sequence, read N- to C-terminus: Glutathione synthetase (316 aa).

The ATP-grasp domain maps to 123 to 309; it reads NEKISTLSFK…ISGILLDSIE (187 aa). 149 to 206 contributes to the ATP binding site; that stretch reads FQEKFGDIILKPINKMGGDSVFYVKKNDPNVSVIIDQLTNYGNSFCLIQEYIKEILNG. Residues E280 and N282 each contribute to the Mg(2+) site.

This sequence belongs to the prokaryotic GSH synthase family. Requires Mg(2+) as cofactor. Mn(2+) serves as cofactor.

It carries out the reaction gamma-L-glutamyl-L-cysteine + glycine + ATP = glutathione + ADP + phosphate + H(+). The protein operates within sulfur metabolism; glutathione biosynthesis; glutathione from L-cysteine and L-glutamate: step 2/2. This Wigglesworthia glossinidia brevipalpis protein is Glutathione synthetase.